Reading from the N-terminus, the 292-residue chain is NAD kinase (292 aa).

Asp73 serves as the catalytic Proton acceptor. NAD(+)-binding positions include 73 to 74, 147 to 148, His158, Arg175, Asp177, 188 to 193, and Gln248; these read DG, NE, and TGYSLS.

This sequence belongs to the NAD kinase family. A divalent metal cation is required as a cofactor.

The protein localises to the cytoplasm. It catalyses the reaction NAD(+) + ATP = ADP + NADP(+) + H(+). Functionally, involved in the regulation of the intracellular balance of NAD and NADP, and is a key enzyme in the biosynthesis of NADP. Catalyzes specifically the phosphorylation on 2'-hydroxyl of the adenosine moiety of NAD to yield NADP. The polypeptide is NAD kinase (Buchnera aphidicola subsp. Baizongia pistaciae (strain Bp)).